Reading from the N-terminus, the 690-residue chain is Eukaryotic translation initiation factor 3 subunit B (690 aa).

The disordered stretch occupies residues 1-37 (MAKKKSEEQSSADANDSDYQEEPNFEDPPGFVDNISD). The segment covering 15–25 (NDSDYQEEPNF) has biased composition (acidic residues). An RRM domain is found at 57 to 141 (SVVVVDNIPK…HTFAVNLFTD (85 aa)). 5 WD repeats span residues 207 to 246 (TRERFTDTFVKWSPLGTYVVTFHKPGVAIWGGSSFQKIQK), 293 to 331 (DGMSVLSMFRWSHDDKFVARMGENSIHIYETPSFYLLDL), 334 to 369 (IKIPGIRGFSWSPTDNVIAYWVEEQNQIPARVTLME), 442 to 484 (EIRE…KPSL), and 530 to 575 (PDHF…IKRT). Residues 595–645 (EEKQKEIKKNLKKYYAAFEQKDRLRLTRASKELLEKRSQLRETFMEYRNKR) are a coiled coil.

It belongs to the eIF-3 subunit B family. Component of the eukaryotic translation initiation factor 3 (eIF-3) complex. The eIF-3 complex interacts with pix. Interacts with mxt.

It localises to the cytoplasm. Its function is as follows. RNA-binding component of the eukaryotic translation initiation factor 3 (eIF-3) complex, which is involved in protein synthesis of a specialized repertoire of mRNAs and, together with other initiation factors, stimulates binding of mRNA and methionyl-tRNAi to the 40S ribosome. The eIF-3 complex specifically targets and initiates translation of a subset of mRNAs involved in cell proliferation. The chain is Eukaryotic translation initiation factor 3 subunit B from Drosophila sechellia (Fruit fly).